We begin with the raw amino-acid sequence, 468 residues long: UDP-N-acetylmuramate--L-alanine ligase (468 aa).

114–120 is an ATP binding site; sequence GTHGKTT.

Belongs to the MurCDEF family.

The protein localises to the cytoplasm. It catalyses the reaction UDP-N-acetyl-alpha-D-muramate + L-alanine + ATP = UDP-N-acetyl-alpha-D-muramoyl-L-alanine + ADP + phosphate + H(+). Its pathway is cell wall biogenesis; peptidoglycan biosynthesis. In terms of biological role, cell wall formation. The chain is UDP-N-acetylmuramate--L-alanine ligase from Rhodopseudomonas palustris (strain HaA2).